Consider the following 285-residue polypeptide: 4-diphosphocytidyl-2-C-methyl-D-erythritol kinase (285 aa).

Lysine 28 is a catalytic residue. Position 109–119 (109–119 (PVAAGLGGGSA)) interacts with ATP. Residue aspartate 148 is part of the active site.

The protein belongs to the GHMP kinase family. IspE subfamily.

The enzyme catalyses 4-CDP-2-C-methyl-D-erythritol + ATP = 4-CDP-2-C-methyl-D-erythritol 2-phosphate + ADP + H(+). The protein operates within isoprenoid biosynthesis; isopentenyl diphosphate biosynthesis via DXP pathway; isopentenyl diphosphate from 1-deoxy-D-xylulose 5-phosphate: step 3/6. In terms of biological role, catalyzes the phosphorylation of the position 2 hydroxy group of 4-diphosphocytidyl-2C-methyl-D-erythritol. The polypeptide is 4-diphosphocytidyl-2-C-methyl-D-erythritol kinase (Novosphingobium aromaticivorans (strain ATCC 700278 / DSM 12444 / CCUG 56034 / CIP 105152 / NBRC 16084 / F199)).